Consider the following 672-residue polypeptide: Glycine--tRNA ligase beta subunit (672 aa).

Belongs to the class-II aminoacyl-tRNA synthetase family. Tetramer of two alpha and two beta subunits.

The protein localises to the cytoplasm. The enzyme catalyses tRNA(Gly) + glycine + ATP = glycyl-tRNA(Gly) + AMP + diphosphate. The sequence is that of Glycine--tRNA ligase beta subunit from Thermotoga petrophila (strain ATCC BAA-488 / DSM 13995 / JCM 10881 / RKU-1).